We begin with the raw amino-acid sequence, 319 residues long: RWD domain-containing protein 2B (319 aa).

Positions S41 to Y165 constitute an RWD domain. S275 carries the phosphoserine modification.

In Pongo abelii (Sumatran orangutan), this protein is RWD domain-containing protein 2B (RWDD2B).